Here is a 295-residue protein sequence, read N- to C-terminus: Pyridoxal 5'-phosphate synthase subunit PdxS (295 aa).

D-ribose 5-phosphate is bound at residue D25. K82 functions as the Schiff-base intermediate with D-ribose 5-phosphate in the catalytic mechanism. G154 is a D-ribose 5-phosphate binding site. R166 is a binding site for D-glyceraldehyde 3-phosphate. Residues G215 and G236–S237 contribute to the D-ribose 5-phosphate site.

The protein belongs to the PdxS/SNZ family. As to quaternary structure, in the presence of PdxT, forms a dodecamer of heterodimers.

The catalysed reaction is aldehydo-D-ribose 5-phosphate + D-glyceraldehyde 3-phosphate + L-glutamine = pyridoxal 5'-phosphate + L-glutamate + phosphate + 3 H2O + H(+). It functions in the pathway cofactor biosynthesis; pyridoxal 5'-phosphate biosynthesis. Its function is as follows. Catalyzes the formation of pyridoxal 5'-phosphate from ribose 5-phosphate (RBP), glyceraldehyde 3-phosphate (G3P) and ammonia. The ammonia is provided by the PdxT subunit. Can also use ribulose 5-phosphate and dihydroxyacetone phosphate as substrates, resulting from enzyme-catalyzed isomerization of RBP and G3P, respectively. In Bacillus cytotoxicus (strain DSM 22905 / CIP 110041 / 391-98 / NVH 391-98), this protein is Pyridoxal 5'-phosphate synthase subunit PdxS.